Here is a 529-residue protein sequence, read N- to C-terminus: Transcription factor kayak (529 aa).

Positions 118-134 (LQGTDSDNSNASWADAQ) are enriched in polar residues. Disordered stretches follow at residues 118 to 166 (LQGT…SVNG) and 180 to 239 (NAGR…CRKR). Composition is skewed to low complexity over residues 142–153 (TDTSSAHTDSTS) and 182–201 (GRGS…TPAR). Positions 219-282 (EEKRRIRRER…NQLEFFLRAH (64 aa)) constitute a bZIP domain. The tract at residues 221 to 240 (KRRIRRERNKQAAARCRKRR) is basic motif. The tract at residues 247–275 (LTYEVEQLEKKRDGLKKEMETLTDVKNQL) is leucine-zipper. Disordered stretches follow at residues 311 to 390 (AGSC…PMST) and 493 to 529 (DGGT…LVSL). Low complexity predominate over residues 315 to 332 (DSGSSSHHNNNSNDSSNG). Residues 340–350 (SLNSTGRSNSP) are compositionally biased toward polar residues. Residue Ser-349 is modified to Phosphoserine. A compositionally biased stretch (low complexity) spans 363–375 (DGGLDSSCLLDQD). The segment covering 376-387 (GPPPSKRFPLPP) has biased composition (pro residues).

It belongs to the bZIP family. Fos subfamily. Homodimer. Heterodimer with Jra. The kay-Jra heterodimer binds more stably to the AP-1 site than either of the two proteins alone.

The protein resides in the nucleus. Developmentally regulated transcription factor AP-1 binds and recognizes the enhancer DNA sequence: 5'-TGA[CG]TCA-3'. May play a role in the function or determination of a particular subset of cells in the developing embryo. Is able to carry out its function either independently of or in conjunction with Jra. This is Transcription factor kayak from Drosophila ananassae (Fruit fly).